The chain runs to 161 residues: MIDSEGFRPNVGIILANDDGQVLWAKRIGHNAWQFPQGGIQFGETPEQALFRELREEIGLLPEHVQIIAQTKGWLRYRLPHRYIRSDSDPVCIGQKQKWFLLKLTAPAKNIQLNLADPPEFDEWQWVSYWYPLGQVVNFKRDVYRKAMVELCTQLPVQQLP.

The region spanning 6–149 (GFRPNVGIIL…KRDVYRKAMV (144 aa)) is the Nudix hydrolase domain. A Nudix box motif is present at residues 38–59 (GGIQFGETPEQALFRELREEIG).

The protein belongs to the Nudix hydrolase family. RppH subfamily. A divalent metal cation is required as a cofactor.

Accelerates the degradation of transcripts by removing pyrophosphate from the 5'-end of triphosphorylated RNA, leading to a more labile monophosphorylated state that can stimulate subsequent ribonuclease cleavage. The chain is RNA pyrophosphohydrolase from Acinetobacter baumannii (strain AB307-0294).